Consider the following 1357-residue polypeptide: DNA-directed RNA polymerase subunit beta (1357 aa).

The protein belongs to the RNA polymerase beta chain family. The RNAP catalytic core consists of 2 alpha, 1 beta, 1 beta' and 1 omega subunit. When a sigma factor is associated with the core the holoenzyme is formed, which can initiate transcription.

It catalyses the reaction RNA(n) + a ribonucleoside 5'-triphosphate = RNA(n+1) + diphosphate. In terms of biological role, DNA-dependent RNA polymerase catalyzes the transcription of DNA into RNA using the four ribonucleoside triphosphates as substrates. The sequence is that of DNA-directed RNA polymerase subunit beta from Pseudomonas putida (Arthrobacter siderocapsulatus).